We begin with the raw amino-acid sequence, 596 residues long: MKNIRNFSIIAHIDHGKSTLADRIIQECGSVSDRELGKQMMDTMDIEKERGITIKAQSVRLDYVKDGEHYILNLIDTPGHVDFSYEVSKSLASSDGALLIVDAAQGVEAQTIANVYLAMENNLTLIPVINKIDLPAADPTKVAEEIETSIGIDATDAVLVSAKTGVGIRALIDAIVDRIPAPVGDSNAPTKAIIYDSWFDPYLGALGLVRVFDGEIKVNQLVKIMSNGEEHQVLDLMYPHPLKRKKTPVIKTGEIGIVVLGLKEVHVVNVGDTITDAKNPTCEPVVEYEPAKPFVFAGIYPIDTDEFENLRDALDKLRLNDSSLSFQPETSLALGFGFRVGFLGMLHMEVVKERLEREFNLDLIASAPSVIYKVYLNNGEEIHVHNPSELPEVNRIDRIEEPYIKATVITPSEYLGNIITLLINKRGTQTKMTYLNQDRVMLEYEVPMNEIVMDFYDKLKSISKGYASFDYEPIEFRVGDLVKLDIKVAGEAVDALSIVVPRNQALPRGRVLVKNMKEIIPRQLFEVAVQASLGSQVIARETVKSMGKNVTAKCYGGDITRKRKLLEKQKEGKKRMKSIGKVQLPQEAFMSVLKMD.

A tr-type G domain is found at 2-183 (KNIRNFSIIA…AIVDRIPAPV (182 aa)). Residues 14–19 (DHGKST) and 130–133 (NKID) contribute to the GTP site.

It belongs to the TRAFAC class translation factor GTPase superfamily. Classic translation factor GTPase family. LepA subfamily.

The protein resides in the cell inner membrane. The catalysed reaction is GTP + H2O = GDP + phosphate + H(+). Required for accurate and efficient protein synthesis under certain stress conditions. May act as a fidelity factor of the translation reaction, by catalyzing a one-codon backward translocation of tRNAs on improperly translocated ribosomes. Back-translocation proceeds from a post-translocation (POST) complex to a pre-translocation (PRE) complex, thus giving elongation factor G a second chance to translocate the tRNAs correctly. Binds to ribosomes in a GTP-dependent manner. In Sulfurimonas denitrificans (strain ATCC 33889 / DSM 1251) (Thiomicrospira denitrificans (strain ATCC 33889 / DSM 1251)), this protein is Elongation factor 4.